We begin with the raw amino-acid sequence, 65 residues long: Large ribosomal subunit protein uL29 (65 aa).

This sequence belongs to the universal ribosomal protein uL29 family.

In Dehalococcoides mccartyi (strain ATCC BAA-2266 / KCTC 15142 / 195) (Dehalococcoides ethenogenes (strain 195)), this protein is Large ribosomal subunit protein uL29.